The sequence spans 414 residues: Alanine--glyoxylate aminotransferase (414 aa).

The N-terminal 23 residues, 1 to 23 (MFRALARASATLGPQVAGWARTM), are a transit peptide targeting the mitochondrion. Residue lysine 231 is modified to N6-(pyridoxal phosphate)lysine. Position 247 is an N6-acetyllysine; alternate (lysine 247). Residue lysine 247 is modified to N6-succinyllysine; alternate. 2 positions are modified to N6-acetyllysine: lysine 256 and lysine 334. Arginine 382 provides a ligand contact to substrate. The Microbody targeting signal motif lies at 412 to 414 (NKL).

Belongs to the class-V pyridoxal-phosphate-dependent aminotransferase family. As to quaternary structure, homodimer. Pyridoxal 5'-phosphate serves as cofactor.

Its subcellular location is the peroxisome. The protein resides in the mitochondrion matrix. It catalyses the reaction L-serine + pyruvate = 3-hydroxypyruvate + L-alanine. The enzyme catalyses glyoxylate + L-alanine = glycine + pyruvate. In terms of biological role, catalyzes the transamination of glyoxylate to glycine and contributes to the glyoxylate detoxification. Functionally, catalyzes the transamination between L-serine and pyruvate and contributes to gluconeogenesis from the L-serine metabolism. This chain is Alanine--glyoxylate aminotransferase, found in Felis catus (Cat).